Reading from the N-terminus, the 661-residue chain is DNA ligase (661 aa).

NAD(+)-binding positions include 31–35 (DSGYD), 80–81 (SL), and Glu-109. The active-site N6-AMP-lysine intermediate is the Lys-111. 4 residues coordinate NAD(+): Arg-132, Glu-167, Lys-283, and Lys-307. The Zn(2+) site is built by Cys-401, Cys-404, Cys-419, and Cys-424. Residues 582–661 (AGEQLLQGKT…AGFLNLLGLS (80 aa)) form the BRCT domain.

This sequence belongs to the NAD-dependent DNA ligase family. LigA subfamily. The cofactor is Mg(2+). Requires Mn(2+) as cofactor.

The enzyme catalyses NAD(+) + (deoxyribonucleotide)n-3'-hydroxyl + 5'-phospho-(deoxyribonucleotide)m = (deoxyribonucleotide)n+m + AMP + beta-nicotinamide D-nucleotide.. In terms of biological role, DNA ligase that catalyzes the formation of phosphodiester linkages between 5'-phosphoryl and 3'-hydroxyl groups in double-stranded DNA using NAD as a coenzyme and as the energy source for the reaction. It is essential for DNA replication and repair of damaged DNA. The chain is DNA ligase from Syntrophomonas wolfei subsp. wolfei (strain DSM 2245B / Goettingen).